Reading from the N-terminus, the 202-residue chain is Dephospho-CoA kinase (202 aa).

Residues 6–202 (KISVTGDPSS…QCFKALKGTI (197 aa)) form the DPCK domain. 14 to 19 (SSGKTE) is an ATP binding site.

This sequence belongs to the CoaE family.

It is found in the cytoplasm. It carries out the reaction 3'-dephospho-CoA + ATP = ADP + CoA + H(+). Its pathway is cofactor biosynthesis; coenzyme A biosynthesis; CoA from (R)-pantothenate: step 5/5. Functionally, catalyzes the phosphorylation of the 3'-hydroxyl group of dephosphocoenzyme A to form coenzyme A. The polypeptide is Dephospho-CoA kinase (Chlamydia trachomatis serovar D (strain ATCC VR-885 / DSM 19411 / UW-3/Cx)).